The primary structure comprises 486 residues: uncharacterized protein (486 aa).

This sequence belongs to the UbiD family.

This is an uncharacterized protein from Aquifex aeolicus (strain VF5).